The sequence spans 357 residues: UDP-N-acetylglucosamine--N-acetylmuramyl-(pentapeptide) pyrophosphoryl-undecaprenol N-acetylglucosamine transferase (357 aa).

UDP-N-acetyl-alpha-D-glucosamine contacts are provided by residues T10 to G12, N124, S189, I244, and Q289.

It belongs to the glycosyltransferase 28 family. MurG subfamily.

It is found in the cell membrane. It catalyses the reaction Mur2Ac(oyl-L-Ala-gamma-D-Glu-L-Lys-D-Ala-D-Ala)-di-trans,octa-cis-undecaprenyl diphosphate + UDP-N-acetyl-alpha-D-glucosamine = beta-D-GlcNAc-(1-&gt;4)-Mur2Ac(oyl-L-Ala-gamma-D-Glu-L-Lys-D-Ala-D-Ala)-di-trans,octa-cis-undecaprenyl diphosphate + UDP + H(+). It functions in the pathway cell wall biogenesis; peptidoglycan biosynthesis. Its function is as follows. Cell wall formation. Catalyzes the transfer of a GlcNAc subunit on undecaprenyl-pyrophosphoryl-MurNAc-pentapeptide (lipid intermediate I) to form undecaprenyl-pyrophosphoryl-MurNAc-(pentapeptide)GlcNAc (lipid intermediate II). This Lactococcus lactis subsp. cremoris (strain MG1363) protein is UDP-N-acetylglucosamine--N-acetylmuramyl-(pentapeptide) pyrophosphoryl-undecaprenol N-acetylglucosamine transferase.